The following is a 72-amino-acid chain: Rubredoxin (72 aa).

The 54-residue stretch at 19-72 (DAVLECKICWQRYDPAEGDPVWQIPPGTPFAALPAHWRCPRCDGDREQFMVVDG) folds into the Rubredoxin-like domain. Cysteine 24, cysteine 27, cysteine 57, and cysteine 60 together coordinate Fe cation.

This sequence belongs to the rubredoxin family. Requires Fe(3+) as cofactor.

Rubredoxin is a small nonheme, iron protein lacking acid-labile sulfide. Its single Fe, chelated to 4 Cys, functions as an electron acceptor and may also stabilize the conformation of the molecule. Could be involved in hydrogenase-linked redox processes. This Azotobacter vinelandii protein is Rubredoxin (hoxR).